Here is a 149-residue protein sequence, read N- to C-terminus: Low molecular weight protein-tyrosine-phosphatase Wzb (149 aa).

Residue cysteine 9 is the Nucleophile of the active site. Residue arginine 15 is part of the active site. The active-site Proton donor is aspartate 115.

The protein belongs to the low molecular weight phosphotyrosine protein phosphatase family.

It catalyses the reaction O-phospho-L-tyrosyl-[protein] + H2O = L-tyrosyl-[protein] + phosphate. It participates in glycan metabolism; exopolysaccharide biosynthesis. Dephosphorylates Wzc. Required for the extracellular polysaccharide colanic acid synthesis. Probably involved in the export of colanic acid from the cell to medium. Involved in protection of cells against contact-dependent growth inhibition (CDI). The sequence is that of Low molecular weight protein-tyrosine-phosphatase Wzb (wzb) from Salmonella typhimurium (strain LT2 / SGSC1412 / ATCC 700720).